Reading from the N-terminus, the 294-residue chain is MYB-like transcription factor ODO1 (294 aa).

HTH myb-type domains lie at 9–61 (KLGV…TNYL) and 62–116 (RPDL…KKKL). DNA-binding regions (H-T-H motif) lie at residues 37-61 (WRAVPKLAGLKRCGKSCRLRWTNYL) and 89-112 (WSKIAARLPGRTDNEIKNHWNTHI). 2 disordered regions span residues 128 to 152 (PLKKEANLSDQPTTESDQNKENGHQ) and 171 to 191 (TEFDNNSSFSSSASSSENSSC).

In terms of tissue distribution, restricted to the petals, with the highest expression in the limb, probably in both epidermal and mesophyll cell layers.

The protein resides in the nucleus. Its function is as follows. R2R3 MYB-type transcription factor controlling the production of volatile organic compounds (VOCs), including floral volatile benzenoids and phenylpropanoids (FVBP), in flowers of fragrant cultivars (e.g. cv. Mitchell and cv. V26) by regulating the shikimate pathway, via the activation of several genes (e.g. EPSPS, ADT1, PAL1, CFAT and CCoAOMT1). This scent, mostly produced in the evening and night by the petals, attracts the pollinators (e.g. the night-active hawkmoth pollinator Manduca sexta). Promotes the expression of ABCG1 in petals three hours before the onset of volatile scent emission. Anthocyanins production is not controlled by ODO1 as color and scent are produced at different stages of development. Seems to trigger a negative feed-back loop that represses the expression of EOBI. The protein is MYB-like transcription factor ODO1 of Petunia hybrida (Petunia).